The primary structure comprises 447 residues: Phosphoglucosamine mutase (447 aa).

Ser-100 acts as the Phosphoserine intermediate in catalysis. Residues Ser-100, Asp-239, Asp-241, and Asp-243 each coordinate Mg(2+). Ser-100 is modified (phosphoserine).

Belongs to the phosphohexose mutase family. It depends on Mg(2+) as a cofactor. In terms of processing, activated by phosphorylation.

It catalyses the reaction alpha-D-glucosamine 1-phosphate = D-glucosamine 6-phosphate. Functionally, catalyzes the conversion of glucosamine-6-phosphate to glucosamine-1-phosphate. The polypeptide is Phosphoglucosamine mutase (Dictyoglomus turgidum (strain DSM 6724 / Z-1310)).